Here is a 394-residue protein sequence, read N- to C-terminus: Elongation factor Tu (394 aa).

Residues 10 to 204 (KPHINVGTIG…FLDTYIPEPK (195 aa)) form the tr-type G domain. A G1 region spans residues 19–26 (GHVDHGKT). Residue 19 to 26 (GHVDHGKT) coordinates GTP. T26 is a Mg(2+) binding site. Positions 60 to 64 (GITIN) are G2. Positions 81-84 (DCPG) are G3. GTP is bound by residues 81 to 85 (DCPGH) and 136 to 139 (NKCD). The tract at residues 136–139 (NKCD) is G4. The tract at residues 174–176 (SAL) is G5.

Belongs to the TRAFAC class translation factor GTPase superfamily. Classic translation factor GTPase family. EF-Tu/EF-1A subfamily. In terms of assembly, monomer.

Its subcellular location is the cytoplasm. The enzyme catalyses GTP + H2O = GDP + phosphate + H(+). GTP hydrolase that promotes the GTP-dependent binding of aminoacyl-tRNA to the A-site of ribosomes during protein biosynthesis. The protein is Elongation factor Tu of Buchnera aphidicola subsp. Schizaphis graminum (strain Sg).